A 314-amino-acid chain; its full sequence is Taste receptor type 2 member 42 (314 aa).

The Extracellular segment spans residues 1-7 (MATELDK). A helical membrane pass occupies residues 8–28 (IFLILEIAEFIIGMLGNVFIG). Residues 29–50 (LVNCSEGIKNQKVFSADFILTC) are Cytoplasmic-facing. A helical transmembrane segment spans residues 51–71 (LAISTIGQLFVILFDSFLVGL). Over 72 to 101 (ASHLYTTYRLGKPVIMLWHMTNHLTTWLAT) the chain is Extracellular. Residues 102–122 (CLSIFYFFKIAHFPHSLFLWL) traverse the membrane as a helical segment. The Cytoplasmic segment spans residues 123–127 (RWRMN). The chain crosses the membrane as a helical span at residues 128–148 (GMIVMLLILSLFLLIFDSLVL). Topologically, residues 149 to 187 (EIFIDISLNIIDKSNLTLYLDESKTLYDKLSILKTLLSL) are extracellular. The N-linked (GlcNAc...) asparagine glycan is linked to Asn-163. Residues 188-208 (TSFIPFSLSLTSLLFFFLSLV) traverse the membrane as a helical segment. Residues 209-238 (RHTRNLKLSSLGSRDSSTEAHRRAMKMVMS) are Cytoplasmic-facing. A helical membrane pass occupies residues 239–259 (FLFLFIVHFFSLQVANWIFFM). Residues 260 to 265 (LWNNKY) are Extracellular-facing. Residues 266 to 286 (IKFAMLALNAFPSCHSFILIL) traverse the membrane as a helical segment. Topologically, residues 287–314 (GNSKLRQTAVRLLWHLRNYTKTPNALPL) are cytoplasmic.

It belongs to the G-protein coupled receptor T2R family.

Its subcellular location is the membrane. In terms of biological role, receptor that may play a role in the perception of bitterness and is gustducin-linked. May play a role in sensing the chemical composition of the gastrointestinal content. The activity of this receptor may stimulate alpha gustducin, mediate PLC-beta-2 activation and lead to the gating of TRPM5. This Pan paniscus (Pygmy chimpanzee) protein is Taste receptor type 2 member 42 (TAS2R42).